A 391-amino-acid chain; its full sequence is 1-deoxy-D-xylulose 5-phosphate reductoisomerase (391 aa).

Thr-17, Gly-18, Ser-19, Ile-20, Asn-47, and Asn-130 together coordinate NADPH. Residue Lys-131 participates in 1-deoxy-D-xylulose 5-phosphate binding. Glu-132 serves as a coordination point for NADPH. Asp-156 is a binding site for Mn(2+). 1-deoxy-D-xylulose 5-phosphate-binding residues include Ser-157, Glu-158, Ser-182, and His-205. Residue Glu-158 participates in Mn(2+) binding. Gly-211 contributes to the NADPH binding site. 1-deoxy-D-xylulose 5-phosphate contacts are provided by Ser-218, Asn-223, Lys-224, and Glu-227. Residue Glu-227 coordinates Mn(2+).

The protein belongs to the DXR family. Requires Mg(2+) as cofactor. It depends on Mn(2+) as a cofactor.

The catalysed reaction is 2-C-methyl-D-erythritol 4-phosphate + NADP(+) = 1-deoxy-D-xylulose 5-phosphate + NADPH + H(+). It functions in the pathway isoprenoid biosynthesis; isopentenyl diphosphate biosynthesis via DXP pathway; isopentenyl diphosphate from 1-deoxy-D-xylulose 5-phosphate: step 1/6. Its function is as follows. Catalyzes the NADPH-dependent rearrangement and reduction of 1-deoxy-D-xylulose-5-phosphate (DXP) to 2-C-methyl-D-erythritol 4-phosphate (MEP). The sequence is that of 1-deoxy-D-xylulose 5-phosphate reductoisomerase from Sinorhizobium medicae (strain WSM419) (Ensifer medicae).